We begin with the raw amino-acid sequence, 349 residues long: Isopentenyl-diphosphate delta-isomerase (349 aa).

Substrate is bound at residue 12 to 13 (RK). FMN contacts are provided by residues Ser-69, 70–72 (SMT), Ser-101, and Asn-129. 101 to 103 (SQR) is a substrate binding site. Gln-164 is a substrate binding site. Position 165 (Glu-165) interacts with Mg(2+). FMN contacts are provided by residues Lys-196, Thr-226, 279–281 (GIR), and 300–301 (AA).

It belongs to the IPP isomerase type 2 family. As to quaternary structure, homooctamer. Dimer of tetramers. FMN is required as a cofactor. Requires NADPH as cofactor. The cofactor is Mg(2+).

The protein localises to the cytoplasm. It catalyses the reaction isopentenyl diphosphate = dimethylallyl diphosphate. Its function is as follows. Involved in the biosynthesis of isoprenoids. Catalyzes the 1,3-allylic rearrangement of the homoallylic substrate isopentenyl (IPP) to its allylic isomer, dimethylallyl diphosphate (DMAPP). The polypeptide is Isopentenyl-diphosphate delta-isomerase (Paracoccus zeaxanthinifaciens).